A 578-amino-acid polypeptide reads, in one-letter code: GRAM domain-containing protein 4 (578 aa).

2 disordered regions span residues 23 to 58 (ESPN…AGPG) and 136 to 159 (TEEQ…ERRS). A phosphoserine mark is found at Ser24 and Ser28. The segment covering 44–53 (SPRDSEELRD) has biased composition (basic and acidic residues). The stretch at 83-143 (HLEIALLEKH…ARTEEQMAQQ (61 aa)) forms a coiled coil. Helical transmembrane passes span 240–260 (VYMN…LAIL), 334–354 (ITQK…FFPY), and 356–376 (LVGL…DFIF). The tract at residues 415-435 (QTTSSRSYVPSAPAGLGKEED) is disordered. The GRAM domain occupies 445–523 (GNFHEIFNLT…VDITDIQKYK (79 aa)).

Interacts with RTN4 (isoform B). In terms of tissue distribution, expressed in lung and in primary lung squamous cell carcinoma (LSCC).

It is found in the mitochondrion membrane. Its subcellular location is the endoplasmic reticulum membrane. Functionally, plays a role as a mediator of E2F1-induced apoptosis in the absence of p53/TP53. Plays a role as a mediator of E2F1-induced apoptosis in the absence of p53/TP53. Inhibits TLR9 response to nucelic acids and regulates TLR9-mediated innate immune response. The polypeptide is GRAM domain-containing protein 4 (Homo sapiens (Human)).